The following is a 294-amino-acid chain: Aquaporin NIP2-2 (294 aa).

Transmembrane regions (helical) follow at residues 54–74 and 88–108; these read VISEVVATFLLVFVTCGAASI and SVAGGLIVTVMIYATGHISGA. The NPA 1 motif lies at 111 to 113; it reads NPA. A run of 3 helical transmembrane segments spans residues 129 to 151, 169 to 189, and 197 to 217; these read VPFYWAAQFTGAMCAAFVLKAVL, ALLIEIVVTFNMMFVTCAVAT, and LAGLAVGSAVCITSIFAGPVS. An NPA 2 motif is present at residues 222–224; sequence NPA. Residues 235–255 form a helical membrane-spanning segment; sequence VFTGLWIYFLGPVIGTLSGAW.

It belongs to the MIP/aquaporin (TC 1.A.8) family. NIP (TC 1.A.8.12) subfamily.

It is found in the membrane. Aquaporins facilitate the transport of water and small neutral solutes across cell membranes. The sequence is that of Aquaporin NIP2-2 (NIP2-2) from Zea mays (Maize).